A 146-amino-acid chain; its full sequence is U1 small nuclear ribonucleoprotein C (146 aa).

A Matrin-type zinc finger spans residues 4 to 36 (YYCDYCDTYLTHDSPSVRKTHCTGRKHRDNVKF). Residues 64 to 96 (NNPFAGGPSSAPPKPSGVSIPPPNMGAPPRPGM) are disordered. Positions 73-96 (SAPPKPSGVSIPPPNMGAPPRPGM) are enriched in pro residues.

The protein belongs to the U1 small nuclear ribonucleoprotein C family. As to quaternary structure, U1 snRNP is composed of the 7 core Sm proteins B/B', D1, D2, D3, E, F and G that assemble in a heptameric protein ring on the Sm site of the small nuclear RNA to form the core snRNP, and at least 3 U1 snRNP-specific proteins U1-70K, U1-A and U1-C. U1-C interacts with U1 snRNA and the 5' splice-site region of the pre-mRNA.

The protein resides in the nucleus. Its function is as follows. Component of the spliceosomal U1 snRNP, which is essential for recognition of the pre-mRNA 5' splice-site and the subsequent assembly of the spliceosome. U1-C is directly involved in initial 5' splice-site recognition for both constitutive and regulated alternative splicing. The interaction with the 5' splice-site seems to precede base-pairing between the pre-mRNA and the U1 snRNA. Stimulates commitment or early (E) complex formation by stabilizing the base pairing of the 5' end of the U1 snRNA and the 5' splice-site region. This is U1 small nuclear ribonucleoprotein C from Drosophila pseudoobscura pseudoobscura (Fruit fly).